The following is a 541-amino-acid chain: Valine N-monooxygenase 2 (541 aa).

Topologically, residues 1 to 18 are cytoplasmic; sequence MAMNVSTTATTTASFAST. A helical membrane pass occupies residues 19 to 41; sequence SSMNNTAKILLITLFISIVSTVI. Topologically, residues 42–541 are lumenal; the sequence is KLQKRASYKK…LAPHLYPTSP (500 aa). Residue Asn277 is glycosylated (N-linked (GlcNAc...) asparagine). Residue Cys477 coordinates heme. Asn505 carries an N-linked (GlcNAc...) asparagine glycan.

This sequence belongs to the cytochrome P450 family. Requires heme as cofactor. In terms of tissue distribution, expressed in the epidermis, the next two cortex cell layers, the endodermis and the pericycle of leaf petioles. Strong expression around the laticifers among the phloem cells and in parenchymatic cells between the protoxylem and the metaxylem cells. In the leaves, preferentially expressed in the mesophyll cells adjacent to the epidermis.

The protein localises to the microsome membrane. The catalysed reaction is L-valine + 2 reduced [NADPH--hemoprotein reductase] + 2 O2 = (E)-2-methylpropanal oxime + 2 oxidized [NADPH--hemoprotein reductase] + CO2 + 3 H2O + 2 H(+). It carries out the reaction L-valine + reduced [NADPH--hemoprotein reductase] + O2 = N-hydroxy-L-valine + oxidized [NADPH--hemoprotein reductase] + H2O + 2 H(+). The enzyme catalyses N-hydroxy-L-valine + reduced [NADPH--hemoprotein reductase] + O2 = N,N-dihydroxy-L-valine + oxidized [NADPH--hemoprotein reductase] + H2O + H(+). It catalyses the reaction L-isoleucine + 2 reduced [NADPH--hemoprotein reductase] + 2 O2 = (1E,2S)-2-methylbutanal oxime + 2 oxidized [NADPH--hemoprotein reductase] + CO2 + 3 H2O + 2 H(+). The catalysed reaction is L-isoleucine + reduced [NADPH--hemoprotein reductase] + O2 = N-hydroxy-L-isoleucine + oxidized [NADPH--hemoprotein reductase] + H2O + 2 H(+). It carries out the reaction N-hydroxy-L-isoleucine + reduced [NADPH--hemoprotein reductase] + O2 = N,N-dihydroxy-L-isoleucine + oxidized [NADPH--hemoprotein reductase] + H2O + H(+). Involved in the biosynthesis of the cyanogenic glucosides linamarin and lotaustralin. Can use L-valine or L-isoleucine as substrate. Catalyzes multi-step reactions starting with two successive N-hydroxylations using L-valine and L-isoleucine as substrates leading to the formation of N,N-dihydroxy-L-valine and N,N-dihydroxy-L-isoleucine, respectively; following spontaneous reactions lead to the production of (E)-2-methylpropanal oxime and (1E,2S)-2-methylbutanal oxime, respectively. This Manihot esculenta (Cassava) protein is Valine N-monooxygenase 2.